Consider the following 184-residue polypeptide: Large ribosomal subunit protein uL5 (184 aa).

This sequence belongs to the universal ribosomal protein uL5 family. Part of the 50S ribosomal subunit; part of the 5S rRNA/L5/L18/L25 subcomplex. Contacts the 5S rRNA and the P site tRNA. Forms a bridge to the 30S subunit in the 70S ribosome.

This is one of the proteins that bind and probably mediate the attachment of the 5S RNA into the large ribosomal subunit, where it forms part of the central protuberance. In the 70S ribosome it contacts protein S13 of the 30S subunit (bridge B1b), connecting the 2 subunits; this bridge is implicated in subunit movement. Contacts the P site tRNA; the 5S rRNA and some of its associated proteins might help stabilize positioning of ribosome-bound tRNAs. The chain is Large ribosomal subunit protein uL5 from Syntrophotalea carbinolica (strain DSM 2380 / NBRC 103641 / GraBd1) (Pelobacter carbinolicus).